The primary structure comprises 525 residues: GMP synthase [glutamine-hydrolyzing] (525 aa).

One can recognise a Glutamine amidotransferase type-1 domain in the interval 9 to 207 (RILILDFGSQ…VLGICGCEAL (199 aa)). Catalysis depends on cysteine 86, which acts as the Nucleophile. Active-site residues include histidine 181 and glutamate 183. A GMPS ATP-PPase domain is found at 208–400 (WTSATIIEDA…LGLPYDMLYR (193 aa)). 235 to 241 (SGGVDSS) provides a ligand contact to ATP.

In terms of assembly, homodimer.

It carries out the reaction XMP + L-glutamine + ATP + H2O = GMP + L-glutamate + AMP + diphosphate + 2 H(+). Its pathway is purine metabolism; GMP biosynthesis; GMP from XMP (L-Gln route): step 1/1. Its function is as follows. Catalyzes the synthesis of GMP from XMP. This is GMP synthase [glutamine-hydrolyzing] from Yersinia pseudotuberculosis serotype IB (strain PB1/+).